Reading from the N-terminus, the 313-residue chain is Aspartate carbamoyltransferase catalytic subunit (313 aa).

Carbamoyl phosphate contacts are provided by arginine 58 and threonine 59. Lysine 86 lines the L-aspartate pocket. 3 residues coordinate carbamoyl phosphate: arginine 108, histidine 136, and glutamine 139. L-aspartate is bound by residues arginine 169 and arginine 223. Positions 264 and 265 each coordinate carbamoyl phosphate.

This sequence belongs to the aspartate/ornithine carbamoyltransferase superfamily. ATCase family. As to quaternary structure, heterododecamer (2C3:3R2) of six catalytic PyrB chains organized as two trimers (C3), and six regulatory PyrI chains organized as three dimers (R2).

The catalysed reaction is carbamoyl phosphate + L-aspartate = N-carbamoyl-L-aspartate + phosphate + H(+). It functions in the pathway pyrimidine metabolism; UMP biosynthesis via de novo pathway; (S)-dihydroorotate from bicarbonate: step 2/3. Its function is as follows. Catalyzes the condensation of carbamoyl phosphate and aspartate to form carbamoyl aspartate and inorganic phosphate, the committed step in the de novo pyrimidine nucleotide biosynthesis pathway. This is Aspartate carbamoyltransferase catalytic subunit from Chlorobium luteolum (strain DSM 273 / BCRC 81028 / 2530) (Pelodictyon luteolum).